We begin with the raw amino-acid sequence, 635 residues long: Threonine--tRNA ligase (635 aa).

Residues 1-61 form the TGS domain; that stretch reads MVSIRLPDGS…DRDASLAIVT (61 aa). The catalytic stretch occupies residues 242–533; the sequence is DHRKLGKQLD…LIEHHAGAMP (292 aa). Cysteine 333, histidine 384, and histidine 510 together coordinate Zn(2+).

The protein belongs to the class-II aminoacyl-tRNA synthetase family. In terms of assembly, homodimer. It depends on Zn(2+) as a cofactor.

The protein resides in the cytoplasm. It carries out the reaction tRNA(Thr) + L-threonine + ATP = L-threonyl-tRNA(Thr) + AMP + diphosphate + H(+). In terms of biological role, catalyzes the attachment of threonine to tRNA(Thr) in a two-step reaction: L-threonine is first activated by ATP to form Thr-AMP and then transferred to the acceptor end of tRNA(Thr). Also edits incorrectly charged L-seryl-tRNA(Thr). This Burkholderia vietnamiensis (strain G4 / LMG 22486) (Burkholderia cepacia (strain R1808)) protein is Threonine--tRNA ligase.